Here is a 379-residue protein sequence, read N- to C-terminus: 3-dehydroquinate synthase (379 aa).

NAD(+) is bound by residues 67-72 (PGEKNK), 101-105 (GIILD), 125-126 (TT), lysine 138, and lysine 147. Zn(2+) contacts are provided by glutamate 180, histidine 242, and histidine 258.

This sequence belongs to the sugar phosphate cyclases superfamily. Dehydroquinate synthase family. The cofactor is NAD(+). Co(2+) is required as a cofactor. It depends on Zn(2+) as a cofactor.

The protein resides in the cytoplasm. The enzyme catalyses 7-phospho-2-dehydro-3-deoxy-D-arabino-heptonate = 3-dehydroquinate + phosphate. It functions in the pathway metabolic intermediate biosynthesis; chorismate biosynthesis; chorismate from D-erythrose 4-phosphate and phosphoenolpyruvate: step 2/7. Functionally, catalyzes the conversion of 3-deoxy-D-arabino-heptulosonate 7-phosphate (DAHP) to dehydroquinate (DHQ). This chain is 3-dehydroquinate synthase, found in Chlamydia caviae (strain ATCC VR-813 / DSM 19441 / 03DC25 / GPIC) (Chlamydophila caviae).